Reading from the N-terminus, the 245-residue chain is 4-hydroxy-tetrahydrodipicolinate reductase (245 aa).

Residues 7-12 (GAKGKV), 75-77 (GTT), and 102-105 (APNF) contribute to the NAD(+) site. Histidine 132 functions as the Proton donor/acceptor in the catalytic mechanism. A (S)-2,3,4,5-tetrahydrodipicolinate-binding site is contributed by histidine 133. Lysine 136 serves as the catalytic Proton donor. 142-143 (GT) provides a ligand contact to (S)-2,3,4,5-tetrahydrodipicolinate.

It belongs to the DapB family.

The protein resides in the cytoplasm. The catalysed reaction is (S)-2,3,4,5-tetrahydrodipicolinate + NAD(+) + H2O = (2S,4S)-4-hydroxy-2,3,4,5-tetrahydrodipicolinate + NADH + H(+). The enzyme catalyses (S)-2,3,4,5-tetrahydrodipicolinate + NADP(+) + H2O = (2S,4S)-4-hydroxy-2,3,4,5-tetrahydrodipicolinate + NADPH + H(+). It participates in amino-acid biosynthesis; L-lysine biosynthesis via DAP pathway; (S)-tetrahydrodipicolinate from L-aspartate: step 4/4. Functionally, catalyzes the conversion of 4-hydroxy-tetrahydrodipicolinate (HTPA) to tetrahydrodipicolinate. The chain is 4-hydroxy-tetrahydrodipicolinate reductase from Mycobacterium sp. (strain KMS).